An 888-amino-acid chain; its full sequence is MDAGFFRGTSAEQDNRFSNKQKKLLKQLKFAECLEKKVDMSKVNLEVIKPWITKRVTEILGFEDDVVIEFIFNQLEVKNPDSKMMQINLTGFLNGKNAREFMGELWPLLLSAQENIAGIPTAFLELKKEEIKQRQIEQEKLASMKKQDEDKEKRDKEDKDNREKRDRSRSPRRRKSRSPSPRRRSSPIRRERKRSHSRSPHHRTKSRSATPAPEKKEATPEPEPSVKPKETVVQEATSNSDIPKAPKSEPPVPETKEISPERNSKKEREKEKEKTRQRSPTRSKSRSRSRSRSPSHSRPRRRHRSRSRRRPSPRRRPSPRRRTPPRRMPPPPRHRRSRSPVRRRRRSSASLSGSSSSSSSSRSRSPPKKPPKRTVSSPPRKTRRLSPSASPPRRRHRPSPPASPPPKPRRSPTPQQSNRARKSRGSVSPGRASAPKHKSTEKRESPSPAPKPRKAELSESEEDKGGKMAAADSVQQRRQYRRQNQQSSSDSGSSSSSEEERPKRSNVKNGEVGRRRRHSHSRSPSPSPRKRQKEPSPRRRRRSPSPPPARRRRSPSPPPPPRRRRSPSLPRRRSPSPPPRRRSPSPRRYSPPIQRRYSPSPPPKRRTASPPPPPKRRASPSPQSKRRVSHSPPPKQRSSPAAKRRSPSISSKHRKGSPPSRSNRETRSPPQNKRDSPSPRPRASHTSSSPPPLRRGASASPQRRQSPSPSTRPIRRVSRTPEPKKTKASTPSPRSARRVSSSRSASGSPEPAPKKHQGPPSPARSRSPSANWSPAKKAKSPTQSPSPARNSDQEGGGKKKKKKKDKKHKKDKKHKKHKKHKKEKAAVAAAPAAVAAADTTSAQEEQEAETEPKKETESEPEDNLDDLEKHLREKALRSMRKAQVSPPS.

The region spanning 27-126 (QLKFAECLEK…AGIPTAFLEL (100 aa)) is the PWI domain. The span at 139–169 (EKLASMKKQDEDKEKRDKEDKDNREKRDRSR) shows a compositional bias: basic and acidic residues. The tract at residues 139–888 (EKLASMKKQD…MRKAQVSPPS (750 aa)) is disordered. The span at 170–206 (SPRRRKSRSPSPRRRSSPIRRERKRSHSRSPHHRTKS) shows a compositional bias: basic residues. Basic and acidic residues-rich tracts occupy residues 213-232 (PEKKEATPEPEPSVKPKETV) and 254-276 (ETKEISPERNSKKEREKEKEKTR). 2 stretches are compositionally biased toward basic residues: residues 277–325 (QRSP…RTPP) and 332–347 (PRHRRSRSPVRRRRRS). 2 stretches are compositionally biased toward low complexity: residues 348–364 (SASLSGSSSSSSSSRSR) and 473–496 (SVQQRRQYRRQNQQSSSDSGSSSS). Composition is skewed to basic residues over residues 528 to 554 (PRKRQKEPSPRRRRRSPSPPPARRRRS) and 561 to 585 (PRRRRSPSLPRRRSPSPPPRRRSPS). Positions 586–598 (PRRYSPPIQRRYS) are enriched in low complexity. Composition is skewed to basic residues over residues 614–629 (PKRRASPSPQSKRRVS) and 642–656 (AKRRSPSISSKHRKG). The segment covering 662-677 (SNRETRSPPQNKRDSP) has biased composition (basic and acidic residues). Composition is skewed to low complexity over residues 697-712 (ASASPQRRQSPSPSTR), 728-749 (ASTPSPRSARRVSSSRSASGSP), and 763-775 (ARSRSPSANWSPA). Positions 780–790 (SPTQSPSPARN) are enriched in polar residues. The segment covering 798 to 823 (KKKKKKKDKKHKKDKKHKKHKKHKKE) has biased composition (basic residues). A compositionally biased stretch (low complexity) spans 826–843 (AVAAAPAAVAAADTTSAQ). Residues 866–876 (DLEKHLREKAL) are compositionally biased toward basic and acidic residues.

This sequence belongs to the splicing factor SR family.

The protein localises to the nucleus. Involved in pre-mRNA splicing and processing events. This is Serine/arginine repetitive matrix protein 1 (SRRM1) from Gallus gallus (Chicken).